We begin with the raw amino-acid sequence, 878 residues long: NUT family member 2E (878 aa).

5 disordered regions span residues tryptophan 273 to cysteine 324, glutamine 417 to glutamate 511, leucine 527 to proline 560, arginine 622 to glutamate 757, and tryptophan 775 to glutamine 878. 2 stretches are compositionally biased toward pro residues: residues proline 278–glutamine 288 and cysteine 427–proline 444. 2 stretches are compositionally biased toward basic and acidic residues: residues glutamate 537–glutamine 551 and arginine 622–histidine 631.

Belongs to the NUT family.

This Homo sapiens (Human) protein is NUT family member 2E (NUTM2E).